The sequence spans 375 residues: 23S rRNA (uracil(747)-C(5))-methyltransferase RlmC (375 aa).

4 residues coordinate [4Fe-4S] cluster: C3, C11, C14, and C87. Residues Q212, F241, E262, and N307 each coordinate S-adenosyl-L-methionine. C334 acts as the Nucleophile in catalysis.

The protein belongs to the class I-like SAM-binding methyltransferase superfamily. RNA M5U methyltransferase family. RlmC subfamily.

It catalyses the reaction uridine(747) in 23S rRNA + S-adenosyl-L-methionine = 5-methyluridine(747) in 23S rRNA + S-adenosyl-L-homocysteine + H(+). Catalyzes the formation of 5-methyl-uridine at position 747 (m5U747) in 23S rRNA. This Escherichia coli O6:H1 (strain CFT073 / ATCC 700928 / UPEC) protein is 23S rRNA (uracil(747)-C(5))-methyltransferase RlmC.